Reading from the N-terminus, the 1296-residue chain is DNA-directed RNA polymerase subunit beta' (1296 aa).

Zn(2+)-binding residues include cysteine 60, cysteine 62, cysteine 75, and cysteine 78. Residues 185–202 (EEEGGKAAEKRKLRDSAD) are compositionally biased toward basic and acidic residues. The tract at residues 185–204 (EEEGGKAAEKRKLRDSADRQ) is disordered. 3 residues coordinate Mg(2+): aspartate 535, aspartate 537, and aspartate 539. Zn(2+) is bound by residues cysteine 877, cysteine 954, cysteine 961, and cysteine 964.

It belongs to the RNA polymerase beta' chain family. The RNAP catalytic core consists of 2 alpha, 1 beta, 1 beta' and 1 omega subunit. When a sigma factor is associated with the core the holoenzyme is formed, which can initiate transcription. Mg(2+) serves as cofactor. The cofactor is Zn(2+).

It catalyses the reaction RNA(n) + a ribonucleoside 5'-triphosphate = RNA(n+1) + diphosphate. DNA-dependent RNA polymerase catalyzes the transcription of DNA into RNA using the four ribonucleoside triphosphates as substrates. This is DNA-directed RNA polymerase subunit beta' from Kocuria rhizophila (strain ATCC 9341 / DSM 348 / NBRC 103217 / DC2201).